Here is a 145-residue protein sequence, read N- to C-terminus: uncharacterized protein (145 aa).

A coiled-coil region spans residues 1–41; sequence MEQHYHQQNQLRQLKQQQLKELLQQQSKDKEEDEQKHDDYR. Residues 1–91 are disordered; it reads MEQHYHQQNQ…LQISEPEGES (91 aa). Over residues 7–26 the composition is skewed to low complexity; the sequence is QQNQLRQLKQQQLKELLQQQ. Positions 27–42 are enriched in basic and acidic residues; that stretch reads SKDKEEDEQKHDDYRS. The span at 43–58 shows a compositional bias: low complexity; that stretch reads PTKTTTTTATSTSAAT.

This is an uncharacterized protein from Dictyostelium discoideum (Social amoeba).